Consider the following 105-residue polypeptide: Putative RNA-binding protein RbpF (105 aa).

The region spanning 2 to 79 (SIYVGNLSYE…RDLKVNKAKP (78 aa)) is the RRM domain. Residues 75 to 84 (NKAKPKEDRG) show a composition bias toward basic and acidic residues. Residues 75–105 (NKAKPKEDRGSFGGGNRGGYGGGGGGGRSRY) form a disordered region. The segment covering 85–105 (SFGGGNRGGYGGGGGGGRSRY) has biased composition (gly residues).

This chain is Putative RNA-binding protein RbpF (rbpF), found in Nostoc sp. (strain PCC 7120 / SAG 25.82 / UTEX 2576).